We begin with the raw amino-acid sequence, 369 residues long: DNA replication and repair protein RecF (369 aa).

30–37 (GDNAQGKT) provides a ligand contact to ATP.

It belongs to the RecF family.

It localises to the cytoplasm. The RecF protein is involved in DNA metabolism; it is required for DNA replication and normal SOS inducibility. RecF binds preferentially to single-stranded, linear DNA. It also seems to bind ATP. In Streptococcus equi subsp. zooepidemicus (strain MGCS10565), this protein is DNA replication and repair protein RecF.